The following is a 237-amino-acid chain: Lectin alpha chain (237 aa).

2 residues coordinate Mn(2+): glutamate 8 and aspartate 10. Ca(2+)-binding residues include aspartate 10, tyrosine 12, asparagine 14, and aspartate 19. Tyrosine 12 provides a ligand contact to a carbohydrate. 3 residues coordinate Mn(2+): aspartate 19, histidine 24, and serine 34. An a carbohydrate-binding site is contributed by 99-100 (LY). Aspartate 208 contributes to the Ca(2+) binding site. Arginine 228 provides a ligand contact to a carbohydrate.

It belongs to the leguminous lectin family. As to quaternary structure, equilibrium between homodimer and homotetramer. Oligomerization is pH-dependent with homotetramers forming at pH 6.5 and above. Post-translationally, the beta and gamma chains are produced by partial proteolytic processing of the lectin alpha chain by an asparaginyl endopeptidase. Mixture of 60% alpha lectin and 40% of its beta and gamma proteolytic fragments. Seed.

The protein resides in the vacuole. It localises to the aleurone grain. Its function is as follows. D-mannose/D-glucose-binding lectin. Induces histamine release in mast cells from hamster and rat. Induces lymphocyte proliferation and IFNG production. This Macropsychanthus bicolor (Dioclea rostrata) protein is Lectin alpha chain.